Here is a 100-residue protein sequence, read N- to C-terminus: Urease subunit gamma (100 aa).

This sequence belongs to the urease gamma subunit family. Heterotrimer of UreA (gamma), UreB (beta) and UreC (alpha) subunits. Three heterotrimers associate to form the active enzyme.

It is found in the cytoplasm. It carries out the reaction urea + 2 H2O + H(+) = hydrogencarbonate + 2 NH4(+). The protein operates within nitrogen metabolism; urea degradation; CO(2) and NH(3) from urea (urease route): step 1/1. The protein is Urease subunit gamma of Burkholderia ambifaria (strain MC40-6).